The primary structure comprises 98 residues: Flagellar hook-basal body complex protein FliE (98 aa).

Low complexity predominate over residues 1–23; the sequence is MNNINDLRLNNNISNTNKSQNST. The segment at 1–24 is disordered; that stretch reads MNNINDLRLNNNISNTNKSQNSTG.

This sequence belongs to the FliE family.

It localises to the bacterial flagellum basal body. The protein is Flagellar hook-basal body complex protein FliE of Campylobacter jejuni subsp. jejuni serotype O:2 (strain ATCC 700819 / NCTC 11168).